Reading from the N-terminus, the 180-residue chain is Large ribosomal subunit protein uL5 (180 aa).

The protein belongs to the universal ribosomal protein uL5 family. In terms of assembly, part of the 50S ribosomal subunit; part of the 5S rRNA/L5/L18/L25 subcomplex. Contacts the 5S rRNA and the P site tRNA. Forms a bridge to the 30S subunit in the 70S ribosome.

This is one of the proteins that bind and probably mediate the attachment of the 5S RNA into the large ribosomal subunit, where it forms part of the central protuberance. In the 70S ribosome it contacts protein S13 of the 30S subunit (bridge B1b), connecting the 2 subunits; this bridge is implicated in subunit movement. Contacts the P site tRNA; the 5S rRNA and some of its associated proteins might help stabilize positioning of ribosome-bound tRNAs. The protein is Large ribosomal subunit protein uL5 of Mycoplasma pneumoniae (strain ATCC 29342 / M129 / Subtype 1) (Mycoplasmoides pneumoniae).